Here is a 412-residue protein sequence, read N- to C-terminus: Divalent metal cation transporter MntH (412 aa).

Topologically, residues 1–19 (MTNYRVESSSGRAARKMRL) are cytoplasmic. A helical membrane pass occupies residues 20–39 (ALMGPAFIAAIGYIDPGNFA). At 40-51 (TNIQAGASFGYQ) the chain is on the periplasmic side. A helical transmembrane segment spans residues 52–71 (LLWVVVWANLMAMLIQILSA). Residues 72–95 (KLGIATGKNLAEQIRDHYPRPFVW) lie on the Cytoplasmic side of the membrane. A helical transmembrane segment spans residues 96-118 (FYWVQAEIIAMATDLAEFIGAAI). Residues 119-125 (GFKLILG) are Periplasmic-facing. Residues 126-145 (VSLLQGAVLTGIATFLILML) form a helical membrane-spanning segment. At 146–155 (QRRGQKPLEK) the chain is on the cytoplasmic side. Residues 156–175 (VIGGLLLFVAAAYIVELIFS) form a helical membrane-spanning segment. At 176-196 (QPNLAQLGKGMVIPSLPTSEA) the chain is on the periplasmic side. The helical transmembrane segment at 197-220 (VFLAAGVLGATIMPHVIYLHSSLT) threads the bilayer. At 221-238 (QHLHGGSRQQRYSATKWD) the chain is on the cytoplasmic side. Residues 239 to 258 (VAIAMTIAGFVNLAMMATAA) form a helical membrane-spanning segment. Residues 259-276 (AAFHFSGHTGVADLDEAY) lie on the Periplasmic side of the membrane. Residues 277 to 297 (LTLQPLLSHAAATVFGLSLVA) form a helical membrane-spanning segment. The Cytoplasmic portion of the chain corresponds to 298–327 (AGLSSTVVGTLAGQVVMQGFIRFHIPLWVR). The chain crosses the membrane as a helical span at residues 328–344 (RTVTMLPSFIVILMGLD). Residues 345 to 350 (PTRILV) lie on the Periplasmic side of the membrane. Residues 351–370 (MSQVLLSFGIALALVPLLIF) traverse the membrane as a helical segment. Topologically, residues 371–387 (TSDSKLMGDLVNSKRVK) are cytoplasmic. Residues 388-406 (QTGWVIVVLVVALNIWLLV) form a helical membrane-spanning segment. At 407-412 (GTALGL) the chain is on the periplasmic side.

It belongs to the NRAMP family.

It localises to the cell inner membrane. In terms of biological role, h(+)-stimulated, divalent metal cation uptake system. This chain is Divalent metal cation transporter MntH, found in Escherichia coli O127:H6 (strain E2348/69 / EPEC).